Here is a 62-residue protein sequence, read N- to C-terminus: Sperm protamine P1 (62 aa).

The segment at M1–Y62 is disordered.

This sequence belongs to the protamine P1 family. As to expression, testis.

It localises to the nucleus. It is found in the chromosome. Functionally, protamines substitute for histones in the chromatin of sperm during the haploid phase of spermatogenesis. They compact sperm DNA into a highly condensed, stable and inactive complex. The sequence is that of Sperm protamine P1 (PRM1) from Trichosurus vulpecula (Brush-tailed possum).